Here is a 185-residue protein sequence, read N- to C-terminus: Ribosome-recycling factor (185 aa).

Residues 138-157 (ELKKLEKDHTASEDEVKRAQ) are disordered.

This sequence belongs to the RRF family.

Its subcellular location is the cytoplasm. Responsible for the release of ribosomes from messenger RNA at the termination of protein biosynthesis. May increase the efficiency of translation by recycling ribosomes from one round of translation to another. The polypeptide is Ribosome-recycling factor (Desulfitobacterium hafniense (strain DSM 10664 / DCB-2)).